Reading from the N-terminus, the 199-residue chain is Large ribosomal subunit protein uL4 (199 aa).

It belongs to the universal ribosomal protein uL4 family. In terms of assembly, part of the 50S ribosomal subunit.

In terms of biological role, one of the primary rRNA binding proteins, this protein initially binds near the 5'-end of the 23S rRNA. It is important during the early stages of 50S assembly. It makes multiple contacts with different domains of the 23S rRNA in the assembled 50S subunit and ribosome. Functionally, forms part of the polypeptide exit tunnel. This is Large ribosomal subunit protein uL4 from Aquifex pyrophilus.